Consider the following 353-residue polypeptide: Protein RecA (353 aa).

67–74 (GPESSGKT) contributes to the ATP binding site.

Belongs to the RecA family.

It is found in the cytoplasm. Its function is as follows. Can catalyze the hydrolysis of ATP in the presence of single-stranded DNA, the ATP-dependent uptake of single-stranded DNA by duplex DNA, and the ATP-dependent hybridization of homologous single-stranded DNAs. It interacts with LexA causing its activation and leading to its autocatalytic cleavage. The chain is Protein RecA from Shewanella sediminis (strain HAW-EB3).